A 350-amino-acid polypeptide reads, in one-letter code: C5a anaphylatoxin chemotactic receptor 1 (350 aa).

Topologically, residues 1–37 are extracellular; that stretch reads MDSFNYTTPDYGHYDDKDTLDLNTPVDKTSNTLRVPD. A glycan (N-linked (GlcNAc...) asparagine) is linked at asparagine 5. Residues 10-18 form a required for CHIPS binding region; sequence DYGHYDDKD. Residues tyrosine 11 and tyrosine 14 each carry the sulfotyrosine modification. The tract at residues 21 to 30 is involved in C5a binding; sequence DLNTPVDKTS. Residues 38–64 form a helical membrane-spanning segment; the sequence is ILALVIFAVVFLVGVLGNALVVWVTAF. Residues 65 to 69 are Cytoplasmic-facing; it reads EAKRT. A helical transmembrane segment spans residues 70–93; it reads INAIWFLNLAVADFLSCLALPILF. Over 94 to 110 the chain is Extracellular; the sequence is TSIVQHHHWPFGGAACS. A disulfide bridge connects residues cysteine 109 and cysteine 188. A helical transmembrane segment spans residues 111–132; the sequence is ILPSLILLNMYASILLLATISA. Residues 133–153 are Cytoplasmic-facing; sequence DRFLLVFKPIWCQNFRGAGLA. The helical transmembrane segment at 154–174 threads the bilayer; the sequence is WIACAVAWGLALLLTIPSFLY. Residues 175–200 are Extracellular-facing; the sequence is RVVREEYFPPKVLCGVDYSHDKRRER. A helical membrane pass occupies residues 201–226; sequence AVAIVRLVLGFLWPLLTLTICYTFIL. The Cytoplasmic portion of the chain corresponds to 227-242; the sequence is LRTWSRRATRSTKTLK. Residues 243–265 form a helical membrane-spanning segment; that stretch reads VVVAVVASFFIFWLPYQVTGIMM. At 266-282 the chain is on the extracellular side; the sequence is SFLEPSSPTFLLLKKLD. Residues 283–303 form a helical membrane-spanning segment; the sequence is SLCVSFAYINCCINPIIYVVA. The Cytoplasmic segment spans residues 304-350; it reads GQGFQGRLRKSLPSLLRNVLTEESVVRESKSFTRSTVDTMAQKTQAV. Phosphoserine is present on residues serine 314, serine 317, serine 327, serine 332, serine 334, and serine 338.

This sequence belongs to the G-protein coupled receptor 1 family. In terms of assembly, homodimer. May also form higher-order oligomers. Interacts (when phosphorylated) with ARRB1 and ARRB2; the interaction is associated with internalization of C5aR. Interacts (via N-terminal domain) with S.aureus chemotaxis inhibitory protein (CHIPS); the interaction blocks the receptor and may thus inhibit the immune response. Post-translationally, sulfation plays a critical role in the association of C5aR with C5a, but no significant role in the ability of the receptor to transduce a signal and mobilize calcium in response to a small a small peptide agonist. Sulfation at Tyr-14 is important for CHIPS binding. In terms of processing, phosphorylated on serine residues in response to C5a binding, resulting in internalization of the receptor and short-term desensitization to the ligand. The key residues involved in this process are Ser-334 and Ser-338.

Its subcellular location is the cell membrane. It localises to the cytoplasmic vesicle. Its function is as follows. Receptor for the chemotactic and inflammatory peptide anaphylatoxin C5a. The ligand interacts with at least two sites on the receptor: a high-affinity site on the extracellular N-terminus, and a second site in the transmembrane region which activates downstream signaling events. Receptor activation stimulates chemotaxis, granule enzyme release, intracellular calcium release and superoxide anion production. The sequence is that of C5a anaphylatoxin chemotactic receptor 1 (C5AR1) from Homo sapiens (Human).